The sequence spans 189 residues: MTEYKLVIVGGGGVGKSALTIQLIQNHFIDEYDPTIEDSYRKQVTIDEETCLLDILDTAGQEEYSAMRDQYMRTGQGFLCVYSITSRSSFDEIASFREQILRVKDKDRVPMIVVGNKCDLESDRQVTTGEGQDLAKSFGSPFLETSAKIRVNVEEAFYSLVREIRKDLKGDSKPEKGKKKRPLKACTLL.

Position 10 to 17 (10 to 17) interacts with GTP; it reads GGGGVGKS. The Effector region signature appears at 32 to 40; sequence YDPTIEDSY. GTP is bound by residues 57-61 and 116-119; these read DTAGQ and NKCD. The disordered stretch occupies residues 169–189; that stretch reads KGDSKPEKGKKKRPLKACTLL. Cysteine methyl ester is present on Cys186. Residue Cys186 is the site of S-geranylgeranyl cysteine attachment. Residues 187–189 constitute a propeptide, removed in mature form; that stretch reads TLL.

The protein belongs to the small GTPase superfamily. Ras family. Interacts with ripA.

It localises to the cell membrane. It catalyses the reaction GTP + H2O = GDP + phosphate + H(+). With respect to regulation, alternates between an inactive form bound to GDP and an active form bound to GTP. Activated by a guanine nucleotide-exchange factor (GEF) and inactivated by a GTPase-activating protein (GAP). Functionally, ras proteins bind GDP/GTP and possess intrinsic GTPase activity. The sequence is that of Ras-like protein rasG (rasG) from Dictyostelium discoideum (Social amoeba).